Here is a 375-residue protein sequence, read N- to C-terminus: DNA replication and repair protein RecF (375 aa).

30-37 (GENAQGKT) lines the ATP pocket.

The protein belongs to the RecF family.

The protein resides in the cytoplasm. The RecF protein is involved in DNA metabolism; it is required for DNA replication and normal SOS inducibility. RecF binds preferentially to single-stranded, linear DNA. It also seems to bind ATP. This Bacillus thuringiensis (strain Al Hakam) protein is DNA replication and repair protein RecF.